The following is a 341-amino-acid chain: Major histocompatibility complex class I-related protein 1 (341 aa).

The N-terminal stretch at 1–18 (MMLLLPLLAVFLVKRSHT) is a signal peptide. Positions 19–105 (RTHSLRYFRL…RHLQRHYNHS (87 aa)) are alpha-1. The interval 19–197 (RTHSLRYFRL…EYGRDTLERT (179 aa)) is antigen-binding cleft. The Extracellular portion of the chain corresponds to 19–296 (RTHSLRYFRL…APRESGDILR (278 aa)). The 8-(9H-purin-6-yl)-2-oxa-8-azabicyclo[3.3.1]nona-3,6-diene-4,6-dicarbaldehyde site is built by tyrosine 25 and arginine 27. Arginine 27, serine 42, and lysine 61 together coordinate 5-(2-oxoethylideneamino)-6-(D-ribitylamino)uracil. 5-(2-oxopropylideneamino)-6-(D-ribitylamino)uracil contacts are provided by arginine 27, serine 42, and lysine 61. 3 residues coordinate 7-hydroxy-6-methyl-8-(1-D-ribityl)lumazine: arginine 27, serine 42, and lysine 61. Residues lysine 61 and histidine 76 each coordinate 8-(9H-purin-6-yl)-2-oxa-8-azabicyclo[3.3.1]nona-3,6-diene-4,6-dicarbaldehyde. Lysine 61 contributes to the 2-amino-4-oxopteridine-6-carbaldehyde binding site. Lysine 61 serves as a coordination point for pyridoxal. Asparagine 103 carries N-linked (GlcNAc...) asparagine glycosylation. An alpha-2 region spans residues 106-197 (GLHTYQRMIG…EYGRDTLERT (92 aa)). Arginine 112 contacts 8-(9H-purin-6-yl)-2-oxa-8-azabicyclo[3.3.1]nona-3,6-diene-4,6-dicarbaldehyde. 5-(2-oxoethylideneamino)-6-(D-ribitylamino)uracil contacts are provided by arginine 112, tyrosine 170, and glutamine 171. 3 residues coordinate 5-(2-oxopropylideneamino)-6-(D-ribitylamino)uracil: arginine 112, tyrosine 170, and glutamine 171. Residues arginine 112, tyrosine 170, and glutamine 171 each contribute to the 7-hydroxy-6-methyl-8-(1-D-ribityl)lumazine site. Disulfide bonds link cysteine 116–cysteine 179 and cysteine 218–cysteine 274. Positions 198–289 (EHPVVRTTRK…GRQMVLEAPR (92 aa)) are alpha-3. One can recognise an Ig-like C1-type domain in the interval 200–301 (PVVRTTRKET…GDILRVSTIS (102 aa)). Positions 290 to 296 (ESGDILR) are connecting peptide. Residues 297–317 (VSTISGTTILIIALAGVGVLI) traverse the membrane as a helical segment. Residues 318–341 (WRRSQELKEVMYQPTQVNEGSSPS) are Cytoplasmic-facing.

This sequence belongs to the MHC class I family. As to quaternary structure, heterotrimer that consists of MR1, B2M and metabolite antigen. Major classes of metabolite ligands presented by MR1 include riboflavin-related antigens, pyrimidines and ribityl lumazines, nucleobase adducts and folate derivatives. Forms reversible covalent Schiff base complexes with microbial pyrimidine-based metabolite, which serves as a molecular switch triggering complete folding, stable association with B2M and translocation of the ternary complex from endoplasmic reticulum to the plasma membrane. Alternatively, forms non-Schiff base complexes with ribityl lumazines. On antigen-presenting cells, the ternary complex interacts with TCR on MR1-restricted CD4- or CD8-positive T cell subsets. Interacts with TAPBP and TAPBPL chaperones in the endoplasmic reticulum. TAPBP associated or not with MHC class I peptide loading complex binds ligand-free MR1 or MR1-B2M complex, providing for stable MR1 pools ready for metabolite antigen processing. TAPBPL interacts with MR1 in a ligand-independent way; this interaction may stabilize MR1 pool and facilitate ligand loading and dissociation. Structurally, MR1-B2M heterodimer adopts a topology similar to classical MHC class I molecules, with alpha-1 and alpha-2 domains of MR1 forming the antigen-binding cleft composed of two alpha-helices resting on a floor of 7-stranded anti-parallel beta-pleated sheet. In terms of processing, N-glycosylated. In terms of tissue distribution, highly expressed thymus. Expressed in liver, kidney, spleen, heart, brain, lung, skeletal muscle and testis.

It localises to the cell membrane. The protein localises to the endoplasmic reticulum membrane. It is found in the golgi apparatus membrane. Its subcellular location is the early endosome membrane. The protein resides in the late endosome membrane. Functionally, antigen-presenting molecule specialized in displaying microbial pyrimidine-based metabolites to alpha-beta T cell receptors (TCR) on innate-type mucosal-associated invariant T (MAIT) cells. In complex with B2M preferentially presents riboflavin-derived metabolites to semi-invariant TRAV1 TCRs on MAIT cells, guiding immune surveillance of the microbial metabolome at mucosal epithelial barriers. Signature pyrimidine-based microbial antigens are generated via non-enzymatic condensation of metabolite intermediates of the riboflavin pathway with by-products arising from other metabolic pathways such as glycolysis. Typical potent antigenic metabolites are 5-(2-oxoethylideneamino)-6-D-ribitylaminouracil (5-OE-RU) and 5-(2-oxopropylideneamino)-6-D-ribitylaminouracil (5-OP-RU), products of condensation of 5-amino-6-D-ribityaminouracil (5-A-RU) with glyoxal or methylglyoxal by-products, respectively. May present microbial antigens to various TRAV1-negative MAIT cell subsets, providing for unique recognition of diverse microbes, including pathogens that do not synthesize riboflavin. Upon antigen recognition, elicits rapid innate-type MAIT cell activation to eliminate pathogenic microbes by directly killing infected cells. During T cell development, drives thymic selection and post-thymic terminal differentiation of MAIT cells in a process dependent on commensal microflora. Acts as an immune sensor of cancer cell metabolome. May present a tumor-specific or -associated metabolite essential for cancer cell survival to a pan-cancer TCR on a non-MAIT CD8-positive T cell clone, triggering T cell-mediated killing of a wide range of cancer cell types. May present tumor-enriched pyridoxal and pyridoxal 5'-phosphate antigens, enabling preferential recognition of cancer cells. Presents nucleobase carbonyl adducts generated during oxidative stress. Captures M3Ade, a nucleobase adduct composed of one adenine modified by a malondialdehyde trimer, for recognition by MR1-restricted T cell clones expressing a polyclonal TCR repertoire. The polypeptide is Major histocompatibility complex class I-related protein 1 (Mus musculus (Mouse)).